The following is an 822-amino-acid chain: Structure-specific endonuclease subunit SLX4 (822 aa).

Disordered stretches follow at residues 1-39, 73-117, 277-362, 390-418, 456-507, and 589-676; these read MSHLDLTRHRTRSPSPSQIFGSSTTPVATNSTHSEPSAS, TPAV…PRPL, GTTN…GVSD, RVSSDEDKLGVPSAPASSRQSARDRTSVS, KSHE…SGQL, and KNSA…QASS. Residues 13–39 are compositionally biased toward polar residues; that stretch reads SPSPSQIFGSSTTPVATNSTHSEPSAS. Residues 280–294 show a composition bias toward low complexity; that stretch reads NSSSSEGSSNKSSGK. The segment covering 310-320 has biased composition (polar residues); the sequence is VTTITSLSTAQ. The segment covering 342-354 has biased composition (basic residues); the sequence is GKRSKSQTKKGGN. The segment covering 460-470 has biased composition (low complexity); it reads SSTLTLPSTST. The segment covering 471 to 484 has biased composition (polar residues); it reads NASNQGFSSQNTIN. Residues 490–506 are compositionally biased toward low complexity; sequence SQTTSTTTESTGVESGQ. A compositionally biased stretch (polar residues) spans 589–612; it reads KNSAPTSLPANNANPPDSHASGQK. Over residues 627 to 636 the composition is skewed to basic residues; it reads TTKRASKAPQ. Residues 637 to 650 are compositionally biased toward low complexity; the sequence is KKQSTSSTSHSAKA.

The protein belongs to the SLX4 family. Forms a heterodimer with SLX1. Post-translationally, phosphorylated in response to DNA damage.

The protein resides in the nucleus. Its function is as follows. Regulatory subunit of the SLX1-SLX4 structure-specific endonuclease that resolves DNA secondary structures generated during DNA repair and recombination. Has endonuclease activity towards branched DNA substrates, introducing single-strand cuts in duplex DNA close to junctions with ss-DNA. In Coccidioides immitis (strain RS) (Valley fever fungus), this protein is Structure-specific endonuclease subunit SLX4.